Reading from the N-terminus, the 235-residue chain is Sperm-associated microtubule inner protein 5 (235 aa).

As to quaternary structure, microtubule inner protein component of sperm flagellar doublet microtubules. Expressed in sperm.

The protein localises to the cytoplasm. Its subcellular location is the cytoskeleton. It is found in the flagellum axoneme. The protein resides in the nucleus. Microtubule inner protein (MIP) part of the dynein-decorated doublet microtubules (DMTs) in flagellum axoneme. May serve to reinforce and thus stabilize the microtubule structure in the sperm flagella. The protein is Sperm-associated microtubule inner protein 5 (SPMIP5) of Bos taurus (Bovine).